The chain runs to 2240 residues: Cadherin-89D (2240 aa).

5 consecutive Cadherin domains span residues 70-179, 180-295, 296-411, 412-528, and 529-643; these read SEGV…APEF, LNVP…PPKF, TEGV…VPEF, EADY…TPKF, and EHGN…APYE. 19 N-linked (GlcNAc...) asparagine glycosylation sites follow: Asn-114, Asn-119, Asn-191, Asn-278, Asn-334, Asn-417, Asn-585, Asn-720, Asn-752, Asn-822, Asn-833, Asn-983, Asn-989, Asn-1006, Asn-1255, Asn-1318, Asn-1486, Asn-1529, and Asn-1556. Residues 814 to 844 are disordered; the sequence is MPSEPTSRNITMGSRFRSRNRSRSSKSKRRL. 5 Cadherin domains span residues 824–927, 928–1087, 1171–1284, 1285–1389, and 1411–1520; these read TMGS…APKF, NALT…APMF, TTKC…APTF, KKSW…RPEF, and MLPV…PPKS. Residues 829–844 are compositionally biased toward basic residues; it reads FRSRNRSRSSKSKRRL. 2 consecutive Cadherin domains span residues 1534 to 1660 and 1661 to 1774; these read QHAY…APKF and RGNG…MPVE. A helical transmembrane segment spans residues 1884–1904; that stretch reads FVTVVLLALISLGALIAACCY. Residues 1905-2240 lie on the Cytoplasmic side of the membrane; sequence VCMRQKRRLW…LEFSKSNSLF (336 aa). 2 disordered regions span residues 1930 to 1972 and 2121 to 2140; these read IAGI…PESV and AHLELRQPNTDSSDTYEDSL. Residues 1939-1952 show a composition bias toward basic residues; the sequence is QKQRRQRQQRHTQR. The segment covering 1953–1964 has biased composition (polar residues); sequence CSKGSTGSQRPT.

It localises to the cell membrane. Cadherins are calcium-dependent cell adhesion proteins. They preferentially interact with themselves in a homophilic manner in connecting cells. The chain is Cadherin-89D (Cad89D) from Drosophila melanogaster (Fruit fly).